Consider the following 170-residue polypeptide: Myosin regulatory light chain 2, skeletal muscle isoform type 1 (170 aa).

Ala2 carries the n,N,N-trimethylalanine modification. 2 positions are modified to phosphoserine: Ser16 and Ser17. Phosphothreonine is present on residues Thr26 and Thr36. In terms of domain architecture, EF-hand 1 spans Thr26–Leu61. 4 residues coordinate Ca(2+): Asp39, Asn41, Asp43, and Asp50. The residue at position 76 (Ser76) is a Phosphoserine. EF-hand domains lie at Asp96 to Arg131 and Phe132 to Lys167. Position 102 is a phosphothreonine (Thr102).

In terms of assembly, myosin is a hexamer of 2 heavy chains and 4 light chains.

In Oryctolagus cuniculus (Rabbit), this protein is Myosin regulatory light chain 2, skeletal muscle isoform type 1.